A 293-amino-acid polypeptide reads, in one-letter code: tRNA-cytidine(32) 2-sulfurtransferase (293 aa).

The short motif at Ser71–Ser76 is the PP-loop motif element. Residues Cys146, Cys149, and Cys237 each coordinate [4Fe-4S] cluster.

This sequence belongs to the TtcA family. Homodimer. It depends on Mg(2+) as a cofactor. [4Fe-4S] cluster is required as a cofactor.

It localises to the cytoplasm. The enzyme catalyses cytidine(32) in tRNA + S-sulfanyl-L-cysteinyl-[cysteine desulfurase] + AH2 + ATP = 2-thiocytidine(32) in tRNA + L-cysteinyl-[cysteine desulfurase] + A + AMP + diphosphate + H(+). It functions in the pathway tRNA modification. Its function is as follows. Catalyzes the ATP-dependent 2-thiolation of cytidine in position 32 of tRNA, to form 2-thiocytidine (s(2)C32). The sulfur atoms are provided by the cysteine/cysteine desulfurase (IscS) system. The chain is tRNA-cytidine(32) 2-sulfurtransferase from Sinorhizobium medicae (strain WSM419) (Ensifer medicae).